A 367-amino-acid chain; its full sequence is Cyclin-D3-2 (367 aa).

A compositionally biased stretch (low complexity) spans 324-335; the sequence is STTASVSSSSSS. Residues 324–347 are disordered; sequence STTASVSSSSSSPEPLLKRRRVQE.

The protein belongs to the cyclin family. Cyclin D subfamily. As to quaternary structure, interacts with CDKA-1. Expressed in developing vegetative and floral primordia.

Its function is as follows. Promotes divisions in the guard cells (GCs) after the guard mother cells (GMC) symmetric division when in the presence of CDKA-1. This chain is Cyclin-D3-2 (CYCD3-2), found in Arabidopsis thaliana (Mouse-ear cress).